We begin with the raw amino-acid sequence, 675 residues long: Heat shock 70 kDa protein, mitochondrial (675 aa).

A mitochondrion-targeting transit peptide spans 1 to 52 (MAATLLRSLQRRNLSSSSVSAFRSLTGSTKTSYATHKLASLTRPFSSRPAGN). The segment at 639–675 (VSKIGQHMSGGSSGGPSEGGSQGGEQAPEAEYEEVKK) is disordered. The segment covering 649-661 (GSSGGPSEGGSQG) has biased composition (gly residues). The segment covering 666-675 (PEAEYEEVKK) has biased composition (acidic residues).

The protein belongs to the heat shock protein 70 family.

Its subcellular location is the mitochondrion. This Pisum sativum (Garden pea) protein is Heat shock 70 kDa protein, mitochondrial (HSP1).